Here is a 118-residue protein sequence, read N- to C-terminus: Histone H2B.N (118 aa).

It belongs to the histone H2B family. The nucleosome is a histone octamer containing two molecules each of H2A, H2B, H3 and H4 assembled in one H3-H4 heterotetramer and two H2A-H2B heterodimers. The octamer wraps approximately 147 bp of DNA. In terms of tissue distribution, expressed in germline. Predominantly expressed in oocytes.

It is found in the nucleus. It localises to the chromosome. Its function is as follows. Core component of nucleosome. Nucleosomes wrap and compact DNA into chromatin, limiting DNA accessibility to the cellular machineries which require DNA as a template. Histones thereby play a central role in transcription regulation, DNA repair, DNA replication and chromosomal stability. DNA accessibility is regulated via a complex set of post-translational modifications of histones, also called histone code, and nucleosome remodeling. The sequence is that of Histone H2B.N from Homo sapiens (Human).